Here is a 245-residue protein sequence, read N- to C-terminus: Adenosylcobinamide-GDP ribazoletransferase (245 aa).

The next 5 helical transmembrane spans lie at Trp35–Leu55, Ile108–His128, Gly137–Val157, Ile176–Ile196, and Thr197–Arg217.

This sequence belongs to the CobS family. Requires Mg(2+) as cofactor.

The protein resides in the cell inner membrane. It carries out the reaction alpha-ribazole + adenosylcob(III)inamide-GDP = adenosylcob(III)alamin + GMP + H(+). It catalyses the reaction alpha-ribazole 5'-phosphate + adenosylcob(III)inamide-GDP = adenosylcob(III)alamin 5'-phosphate + GMP + H(+). The protein operates within cofactor biosynthesis; adenosylcobalamin biosynthesis; adenosylcobalamin from cob(II)yrinate a,c-diamide: step 7/7. Functionally, joins adenosylcobinamide-GDP and alpha-ribazole to generate adenosylcobalamin (Ado-cobalamin). Also synthesizes adenosylcobalamin 5'-phosphate from adenosylcobinamide-GDP and alpha-ribazole 5'-phosphate. The chain is Adenosylcobinamide-GDP ribazoletransferase from Nitratidesulfovibrio vulgaris (strain ATCC 29579 / DSM 644 / CCUG 34227 / NCIMB 8303 / VKM B-1760 / Hildenborough) (Desulfovibrio vulgaris).